Consider the following 240-residue polypeptide: Orotidine 5'-phosphate decarboxylase (240 aa).

Substrate-binding positions include Asp19, Lys41, 68–77, Thr123, Arg184, Gln193, Gly213, and Arg214; that span reads DYKYYDIEET. Catalysis depends on Lys70, which acts as the Proton donor.

Belongs to the OMP decarboxylase family. Type 1 subfamily. As to quaternary structure, homodimer.

The enzyme catalyses orotidine 5'-phosphate + H(+) = UMP + CO2. The protein operates within pyrimidine metabolism; UMP biosynthesis via de novo pathway; UMP from orotate: step 2/2. Its function is as follows. Catalyzes the decarboxylation of orotidine 5'-monophosphate (OMP) to uridine 5'-monophosphate (UMP). This chain is Orotidine 5'-phosphate decarboxylase, found in Nitrobacter winogradskyi (strain ATCC 25391 / DSM 10237 / CIP 104748 / NCIMB 11846 / Nb-255).